The following is a 542-amino-acid chain: Chaperonin GroEL 2 (542 aa).

Residues 30-33, K51, 87-91, G415, and D496 each bind ATP; these read TLGP and DGTTT.

It belongs to the chaperonin (HSP60) family. In terms of assembly, forms a cylinder of 14 subunits composed of two heptameric rings stacked back-to-back. Interacts with the co-chaperonin GroES.

Its subcellular location is the cytoplasm. It carries out the reaction ATP + H2O + a folded polypeptide = ADP + phosphate + an unfolded polypeptide.. In terms of biological role, together with its co-chaperonin GroES, plays an essential role in assisting protein folding. The GroEL-GroES system forms a nano-cage that allows encapsulation of the non-native substrate proteins and provides a physical environment optimized to promote and accelerate protein folding. The chain is Chaperonin GroEL 2 from Azorhizobium caulinodans (strain ATCC 43989 / DSM 5975 / JCM 20966 / LMG 6465 / NBRC 14845 / NCIMB 13405 / ORS 571).